A 226-amino-acid chain; its full sequence is MIQVISDVLTPDELKRFRELLGQAQWQDGRATAGHVAVRAKANEQLSHEDSLGQQLSEFLLERLGKISHFIAAALPLKVLPPRFNRYTGGGSYGDHIDNAIFSVPGAGVRIRGDLSATLFLSEPGDYDGGELIIQGEFARHQFKLPAGQMILYPASTFHQVTPVTRGARLAAFFWTQSLVREHSRRALLFELDNTIQALAQDNPEQPAVARLTGLYHNLLREWSET.

In terms of domain architecture, Fe2OG dioxygenase spans 78–178 (KVLPPRFNRY…RLAAFFWTQS (101 aa)). Fe cation is bound by residues H96, D98, and H159. R169 contributes to the 2-oxoglutarate binding site.

It depends on Fe(2+) as a cofactor. The cofactor is L-ascorbate.

In Nitrobacter winogradskyi (strain ATCC 25391 / DSM 10237 / CIP 104748 / NCIMB 11846 / Nb-255), this protein is PKHD-type hydroxylase Nwi_0701.